A 698-amino-acid chain; its full sequence is MAEEARGGQRVVVDDDREDASSVASSTERAFEGEPLPSLGETVTARSAAVSGVLGAVVSVVAMRLNLTSGLLPSLGVPAGLLGFFLARVWIRALDVVGVSHLPFTRQENTLIQIAVVSCSTIAFSGGFGTYILGMSGKSANEGHIGSHGRNVEEPNIGRVIAFLFLVNFSGLFIIVPLRKMMIIRHRLTFPSGTATAHLINSFHTPHGAKQARLQVVTLFKSLGATVLWPIFQWFFAGGKNCGFQIFPTFGMAAYRRGFYFDFSTTNVGIGMICPPMITASMLAGSIVSWGILWPYIETKAGRWFPENLDANDLGGIMGYRVFVGVSMILADGLFTILSALVRTACAMRKRRRGASTVTAAVPPFQCLSATERTMQSFDDRRRAQVFLRDSFPTWVAVASYAALAALSVVAVPLLYPQLGHRHVAAAYVAAPVFAFCNAYGVGVTDMNLSATYGKIAMMVFSSWVGMDGGGVVAGLAACGIIVSAVSGSSDFMQDFKTGYLTLTSPRAMLVGQVAGTALGCVVNPAIFWVFYKVYNMGGGGGDGADVAPYARAYRGIAVLSVGRHGLPDHSVLLCKLFFAMALALSAAREVAERRRWRALRYIPSTIGVAVAFFVPPRIPVGMAVGCLALHVWRRHVDAGGARLLLPAVASGLICGDGLGSLASSMLTLLRARPPICIKFVSRFENQKLDAFLATRHA.

The disordered stretch occupies residues 1-36; the sequence is MAEEARGGQRVVVDDDREDASSVASSTERAFEGEPL. A run of 14 helical transmembrane segments spans residues 43-63, 67-87, 114-134, 157-177, 216-236, 277-297, 322-342, 395-415, 424-444, 463-483, 511-531, 567-587, 607-627, and 644-664; these read VTARSAAVSGVLGAVVSVVAM, LTSGLLPSLGVPAGLLGFFLA, IAVVSCSTIAFSGGFGTYILG, IGRVIAFLFLVNFSGLFIIVP, VVTLFKSLGATVLWPIFQWFF, MITASMLAGSIVSWGILWPYI, VFVGVSMILADGLFTILSALV, WVAVASYAALAALSVVAVPLL, VAAAYVAAPVFAFCNAYGVGV, SWVGMDGGGVVAGLAACGIIV, VGQVAGTALGCVVNPAIFWVF, LPDHSVLLCKLFFAMALALSA, IGVAVAFFVPPRIPVGMAVGC, and LLLPAVASGLICGDGLGSLAS.

Belongs to the YSL (TC 2.A.67.2) family. In terms of tissue distribution, expressed at low levels in roots.

It is found in the membrane. May be involved in the transport of nicotianamine-chelated metals. This chain is Probable metal-nicotianamine transporter YSL17 (YSL17), found in Oryza sativa subsp. japonica (Rice).